The primary structure comprises 313 residues: Protein MFI (313 aa).

Can homodimerize. Interacts with MFF; the interaction inhibits MFF interaction with DNM1L. In terms of tissue distribution, enriched in the pancreatic beta cell and the testis and is expressed at low levels in other tissues tested.

The protein resides in the cytoplasm. It localises to the cytosol. The protein localises to the mitochondrion outer membrane. Its function is as follows. Acts as an inhibitor of mitochondrial fission. Interacts with MFF and prevents DNM1L recruitment to mitochondria, promoting a more fused mitochondrial network. The polypeptide is Protein MFI (Homo sapiens (Human)).